A 1906-amino-acid chain; its full sequence is A disintegrin and metalloproteinase with thrombospondin motifs 20 (1906 aa).

A signal peptide spans 1–26; sequence MRVAKWLTGLLCPISLLLTGSWEVRF. Positions 27 to 249 are excised as a propeptide; sequence HPRQEALVKT…RSQLHSRNKR (223 aa). N-linked (GlcNAc...) asparagine glycans are attached at residues asparagine 92 and asparagine 221. The tract at residues 201-222 is disordered; the sequence is PCEVSENQMEKTALPSQSSRNT. One can recognise a Peptidase M12B domain in the interval 255–464; sequence RYVEVMVTAD…GHGECLLDKP (210 aa). 11 cysteine pairs are disulfide-bonded: cysteine 330–cysteine 383, cysteine 359–cysteine 365, cysteine 377–cysteine 459, cysteine 415–cysteine 443, cysteine 486–cysteine 508, cysteine 497–cysteine 518, cysteine 503–cysteine 537, cysteine 531–cysteine 542, cysteine 565–cysteine 602, cysteine 569–cysteine 607, and cysteine 580–cysteine 592. Residue histidine 399 participates in Zn(2+) binding. Glutamate 400 is an active-site residue. Histidine 403 and histidine 409 together coordinate Zn(2+). The Disintegrin domain occupies 465–552; it reads NGRTYDLSPQ…VTRDMETRPV (88 aa). In terms of domain architecture, TSP type-1 1 spans 553–608; it reads DGEWGPWGPYSSCSRTCGGGIKSTARLCDRPEPRNGGRYCVGRRMKFRSCNTDSCP. Residues asparagine 714, asparagine 798, and asparagine 805 are each glycosylated (N-linked (GlcNAc...) asparagine). Residues 721–842 are spacer; the sequence is AGVFNSAHYG…FNIPIEERSN (122 aa). TSP type-1 domains lie at 843–901, 906–962, 962–1015, 1017–1074, 1075–1131, 1148–1202, and 1203–1260; these read LFSW…MDCE, IIGK…GSCV, VLTR…NCNE, PCPS…RACA, SWHV…APCL, RAAQ…LCFS, and PCGE…AACP. N-linked (GlcNAc...) asparagine glycosylation occurs at asparagine 1057. The tract at residues 1265–1295 is disordered; sequence RAPSSSEQPSHVPSRNVPLTHKPGENQDQGA. Positions 1266–1277 are enriched in polar residues; sequence APSSSEQPSHVP. TSP type-1 domains are found at residues 1300 to 1351, 1354 to 1411, 1412 to 1465, 1468 to 1526, 1527 to 1584, 1585 to 1648, and 1650 to 1706; these read RGNQ…RHCG, PCPH…HACP, EDVS…KACR, RCPS…QDCM, RYQW…PHCK, YSVV…LRSC, and HVAT…NDCK. Asparagine 1562 carries N-linked (GlcNAc...) asparagine glycosylation. The region spanning 1707 to 1906 is the GON domain; that stretch reads LLTTCKELQV…MATGLSIQVL (200 aa). Asparagine 1719, asparagine 1759, and asparagine 1777 each carry an N-linked (GlcNAc...) asparagine glycan.

Zn(2+) is required as a cofactor. The precursor is cleaved by a furin endopeptidase. In terms of processing, glycosylated. Can be O-fucosylated by POFUT2 on a serine or a threonine residue found within the consensus sequence C1-X(2)-(S/T)-C2-G of the TSP type-1 repeat domains where C1 and C2 are the first and second cysteine residue of the repeat, respectively. Fucosylated repeats can then be further glycosylated by the addition of a beta-1,3-glucose residue by the glucosyltransferase, B3GALTL. Fucosylation mediates the efficient secretion of ADAMTS family members. Can also be C-glycosylated with one or two mannose molecules on tryptophan residues within the consensus sequence W-X-X-W of the TPRs, and N-glycosylated. These other glycosylations can also facilitate secretion. As to expression, expressed at low level in testis and brain.

It localises to the secreted. Its subcellular location is the extracellular space. The protein localises to the extracellular matrix. Its function is as follows. May play a role in tissue-remodeling process occurring in both normal and pathological conditions. May have a protease-independent function in the transport from the endoplasmic reticulum to the Golgi apparatus of secretory cargos, mediated by the GON domain. This chain is A disintegrin and metalloproteinase with thrombospondin motifs 20 (Adamts20), found in Mus musculus (Mouse).